A 456-amino-acid polypeptide reads, in one-letter code: Probable mannan endo-1,4-beta-mannosidase F (456 aa).

Positions 1 to 18 (MRPLSSAALLSAIGAVAA) are cleaved as a signal peptide. Positions 19–54 (QVGPWGQCGGQSYTGGTSCVSGWACVFLNDWYSQCQ) constitute a CBM1 domain. The segment at 79-110 (STSVSATAPPSSTSSSTASVSSSTSSTPIPTS) is disordered. The ser-rich linker stretch occupies residues 79–113 (STSVSATAPPSSTSSSTASVSSSTSSTPIPTSSGS). The catalytic stretch occupies residues 114 to 456 (FVKAEGLKFN…CAVIDHVSRI (343 aa)). 2 residues coordinate substrate: W166 and N280. The active-site Proton donor is the E281. Y356 serves as a coordination point for substrate. E390 functions as the Nucleophile in the catalytic mechanism. Substrate is bound at residue W420.

It belongs to the glycosyl hydrolase 5 (cellulase A) family.

It is found in the secreted. It catalyses the reaction Random hydrolysis of (1-&gt;4)-beta-D-mannosidic linkages in mannans, galactomannans and glucomannans.. Endo-1,4-mannanase, a crucial enzyme for depolymerization of seed galactomannans and wood galactoglucomannans. The polypeptide is Probable mannan endo-1,4-beta-mannosidase F (manF) (Neosartorya fischeri (strain ATCC 1020 / DSM 3700 / CBS 544.65 / FGSC A1164 / JCM 1740 / NRRL 181 / WB 181) (Aspergillus fischerianus)).